Consider the following 209-residue polypeptide: Probable GTP-binding protein EngB (209 aa).

Residues 22–198 (TPLEIAFVGR…NRTVGSWFDA (177 aa)) form the EngB-type G domain. Residues serine 37 and threonine 59 each contribute to the Mg(2+) site.

The protein belongs to the TRAFAC class TrmE-Era-EngA-EngB-Septin-like GTPase superfamily. EngB GTPase family. It depends on Mg(2+) as a cofactor.

Its function is as follows. Necessary for normal cell division and for the maintenance of normal septation. In Neisseria meningitidis serogroup C (strain 053442), this protein is Probable GTP-binding protein EngB.